We begin with the raw amino-acid sequence, 256 residues long: uncharacterized protein (256 aa).

Positions 1 to 24 are cleaved as a signal peptide; it reads MIKRVNKLVLGISLLFLVISITAG. The N-palmitoyl cysteine moiety is linked to residue Cys-25. A lipid anchor (S-diacylglycerol cysteine) is attached at Cys-25.

This sequence belongs to the staphylococcal tandem lipoprotein family.

Its subcellular location is the cell membrane. This is an uncharacterized protein from Staphylococcus aureus (strain MW2).